A 497-amino-acid polypeptide reads, in one-letter code: Guanosine-5'-triphosphate,3'-diphosphate pyrophosphatase (497 aa).

The protein belongs to the GppA/Ppx family. GppA subfamily.

It catalyses the reaction guanosine 3'-diphosphate 5'-triphosphate + H2O = guanosine 3',5'-bis(diphosphate) + phosphate + H(+). Its pathway is purine metabolism; ppGpp biosynthesis; ppGpp from GTP: step 2/2. Functionally, catalyzes the conversion of pppGpp to ppGpp. Guanosine pentaphosphate (pppGpp) is a cytoplasmic signaling molecule which together with ppGpp controls the 'stringent response', an adaptive process that allows bacteria to respond to amino acid starvation, resulting in the coordinated regulation of numerous cellular activities. The protein is Guanosine-5'-triphosphate,3'-diphosphate pyrophosphatase of Aliivibrio fischeri (strain ATCC 700601 / ES114) (Vibrio fischeri).